A 154-amino-acid chain; its full sequence is Lipoprotein signal peptidase (154 aa).

The next 2 membrane-spanning stretches (helical) occupy residues 55-75 and 84-104; these read GHMW…IYIM and LFSI…IDRV. Catalysis depends on residues Asp111 and Asp129. A helical transmembrane segment spans residues 124 to 144; it reads IFNVADAALSVGVVLMLVYVF.

It belongs to the peptidase A8 family.

Its subcellular location is the cell membrane. It catalyses the reaction Release of signal peptides from bacterial membrane prolipoproteins. Hydrolyzes -Xaa-Yaa-Zaa-|-(S,diacylglyceryl)Cys-, in which Xaa is hydrophobic (preferably Leu), and Yaa (Ala or Ser) and Zaa (Gly or Ala) have small, neutral side chains.. The protein operates within protein modification; lipoprotein biosynthesis (signal peptide cleavage). In terms of biological role, this protein specifically catalyzes the removal of signal peptides from prolipoproteins. The polypeptide is Lipoprotein signal peptidase (Listeria monocytogenes serotype 4b (strain CLIP80459)).